Reading from the N-terminus, the 1486-residue chain is Chromosome partition protein MukB (1486 aa).

34-41 contacts ATP; it reads GGNGAGKS. Coiled coils occupy residues 334 to 418, 444 to 480, and 509 to 603; these read SDHL…QYNQ, LETF…QAYQ, and RHLA…RAPV. The tract at residues 666-783 is flexible hinge; sequence PGGSEDQRLN…EVPLFGRAAR (118 aa). Coiled coils occupy residues 835-923, 977-1115, and 1209-1266; these read EAEI…AKLE, EMLS…TAKA, and VEAI…QNVS.

Belongs to the SMC family. MukB subfamily. As to quaternary structure, homodimerization via its hinge domain. Binds to DNA via its C-terminal region. Interacts, and probably forms a ternary complex, with MukE and MukF via its C-terminal region. The complex formation is stimulated by calcium or magnesium. Interacts with tubulin-related protein FtsZ.

The protein localises to the cytoplasm. It localises to the nucleoid. Its function is as follows. Plays a central role in chromosome condensation, segregation and cell cycle progression. Functions as a homodimer, which is essential for chromosome partition. Involved in negative DNA supercoiling in vivo, and by this means organize and compact chromosomes. May achieve or facilitate chromosome segregation by condensation DNA from both sides of a centrally located replisome during cell division. The chain is Chromosome partition protein MukB from Shigella sonnei (strain Ss046).